Consider the following 308-residue polypeptide: tRNA dimethylallyltransferase (308 aa).

19 to 26 (GPTASGKS) contributes to the ATP binding site. A substrate-binding site is contributed by 21-26 (TASGKS). The tract at residues 44–47 (DSMQ) is interaction with substrate tRNA.

The protein belongs to the IPP transferase family. In terms of assembly, monomer. Mg(2+) is required as a cofactor.

The enzyme catalyses adenosine(37) in tRNA + dimethylallyl diphosphate = N(6)-dimethylallyladenosine(37) in tRNA + diphosphate. Functionally, catalyzes the transfer of a dimethylallyl group onto the adenine at position 37 in tRNAs that read codons beginning with uridine, leading to the formation of N6-(dimethylallyl)adenosine (i(6)A). The sequence is that of tRNA dimethylallyltransferase from Methylobacterium radiotolerans (strain ATCC 27329 / DSM 1819 / JCM 2831 / NBRC 15690 / NCIMB 10815 / 0-1).